Reading from the N-terminus, the 426-residue chain is 3-phosphoshikimate 1-carboxyvinyltransferase (426 aa).

Positions 21, 22, and 26 each coordinate 3-phosphoshikimate. Lys21 is a binding site for phosphoenolpyruvate. Phosphoenolpyruvate-binding residues include Gly92 and Arg122. Positions 167, 168, 169, 195, 315, and 342 each coordinate 3-phosphoshikimate. Gln169 lines the phosphoenolpyruvate pocket. Asp315 functions as the Proton acceptor in the catalytic mechanism. Phosphoenolpyruvate is bound by residues Arg346 and Arg386.

The protein belongs to the EPSP synthase family. As to quaternary structure, monomer.

It localises to the cytoplasm. It carries out the reaction 3-phosphoshikimate + phosphoenolpyruvate = 5-O-(1-carboxyvinyl)-3-phosphoshikimate + phosphate. It participates in metabolic intermediate biosynthesis; chorismate biosynthesis. Catalyzes the transfer of the enolpyruvyl moiety of phosphoenolpyruvate (PEP) to the 5-hydroxyl of shikimate-3-phosphate (S3P) to produce enolpyruvyl shikimate-3-phosphate and inorganic phosphate. This Methanosphaera stadtmanae (strain ATCC 43021 / DSM 3091 / JCM 11832 / MCB-3) protein is 3-phosphoshikimate 1-carboxyvinyltransferase.